Consider the following 333-residue polypeptide: Tetraacyldisaccharide 4'-kinase (333 aa).

An ATP-binding site is contributed by 60 to 67 (TVGGTGKT).

Belongs to the LpxK family.

The catalysed reaction is a lipid A disaccharide + ATP = a lipid IVA + ADP + H(+). Its pathway is glycolipid biosynthesis; lipid IV(A) biosynthesis; lipid IV(A) from (3R)-3-hydroxytetradecanoyl-[acyl-carrier-protein] and UDP-N-acetyl-alpha-D-glucosamine: step 6/6. In terms of biological role, transfers the gamma-phosphate of ATP to the 4'-position of a tetraacyldisaccharide 1-phosphate intermediate (termed DS-1-P) to form tetraacyldisaccharide 1,4'-bis-phosphate (lipid IVA). The polypeptide is Tetraacyldisaccharide 4'-kinase (Pseudomonas putida (strain GB-1)).